We begin with the raw amino-acid sequence, 257 residues long: Protein vip1 (257 aa).

The 74-residue stretch at 3 to 76 (NQVIVTNISP…NKIQITSEDG (74 aa)) folds into the RRM domain. The interval 74-99 (EDGGAASTTDQGGAGGDQAARQEDKP) is disordered. Over residues 75–84 (DGGAASTTDQ) the composition is skewed to low complexity. Phosphoserine is present on residues S132 and S177. A disordered region spans residues 217 to 257 (ARRLADAKNQAEGTASPASSTPTAPAEKEPTAPTTESKTTE). T230 is modified (phosphothreonine). Over residues 230–257 (TASPASSTPTAPAEKEPTAPTTESKTTE) the composition is skewed to low complexity. A phosphoserine mark is found at S232 and S235.

The sequence is that of Protein vip1 (vip1) from Schizosaccharomyces pombe (strain 972 / ATCC 24843) (Fission yeast).